Consider the following 296-residue polypeptide: 4-amino-4-deoxyprephenate dehydrogenase (296 aa).

The Prephenate/arogenate dehydrogenase domain occupies 9–288; sequence RCVVVGGAGA…EHGAELERLC (280 aa).

It belongs to the prephenate/arogenate dehydrogenase family.

It carries out the reaction 4-amino-4-deoxyprephenate + NAD(+) = 3-(4-aminophenyl)pyruvate + CO2 + NADH + H(+). Its pathway is antibiotic biosynthesis. Involved in pristinamycin I biosynthesis. Probably catalyzes the formation of 3-(4-aminophenyl)pyruvate from 4-amino-4-deoxyprephenate. In Streptomyces pristinaespiralis, this protein is 4-amino-4-deoxyprephenate dehydrogenase.